The sequence spans 247 residues: MyoD family inhibitor domain-containing protein (247 aa).

2 disordered regions span residues 1–67 (MSCA…NPSA) and 80–110 (QLQT…GNGI). Residues 74–247 (QPERLPQLQT…MECCGICFPS (174 aa)) form the MDFI domain. Ser129 and Ser141 each carry phosphoserine.

It belongs to the MDFI family. As to quaternary structure, interacts with HAND1; the interaction sequesters Hand1 into the nucleolus and inhibits its activity. Interacts (via C-terminus) with ZIC2. Interacts (via C-terminus) with AXIN1, the histidine-rich region of CCNT1/cyclin-T and weakly with LEF1. Interacts with CCNT2. Interacts with GATA2. Interacts (via C-terminus) with Piezo channel composed of PIEZO1 or PIEZO2; the interaction prolongs Piezo channel inactivation. In terms of processing, palmitoylated. In the embryo, robust expression is detected between 16.5 and 18.5 dpc in lung, kidney, and salivary glands. In the developing cardiovascular system, it is detected in lymphatic and cardiac valves (at protein level).

Its subcellular location is the cytoplasm. The protein resides in the secreted. In terms of biological role, required to control the activity of various transcription factors through their sequestration in the cytoplasm. Retains nuclear Zic proteins ZIC1, ZIC2 and ZIC3 in the cytoplasm and inhibits their transcriptional activation. Modulates the expression from cellular promoters. Binds to the axin complex, resulting in an increase in the level of free beta-catenin. Affects axin-regulation of the WNT and JNK signaling pathways. Involved in the development of lymphatic vessel valves. Required to promote lymphatic endothelial cell migration, in a process that involves down-regulation of integrin beta 1 activation and control of cell adhesion to the extracellular matrix. Regulates the activity of mechanosensitive Piezo channel. The sequence is that of MyoD family inhibitor domain-containing protein from Mus musculus (Mouse).